We begin with the raw amino-acid sequence, 629 residues long: Kelch-like protein 13 (629 aa).

Positions C66 to M135 constitute a BTB domain. Residues C170–Q271 enclose the BACK domain. 6 Kelch repeats span residues H315–N363, F364–G415, H416–G462, M464–D509, L511–N561, and K562–V610.

In terms of assembly, component of the BCR(KLHL9-KLHL13) E3 ubiquitin ligase complex, at least composed of CUL3, KLHL9, KLHL13 and RBX1. Interacts with AURKB.

Its pathway is protein modification; protein ubiquitination. Its function is as follows. Substrate-specific adapter of a BCR (BTB-CUL3-RBX1) E3 ubiquitin-protein ligase complex required for mitotic progression and cytokinesis. The BCR(KLHL9-KLHL13) E3 ubiquitin ligase complex mediates the ubiquitination of AURKB and controls the dynamic behavior of AURKB on mitotic chromosomes and thereby coordinates faithful mitotic progression and completion of cytokinesis. The chain is Kelch-like protein 13 (KLHL13) from Gallus gallus (Chicken).